The chain runs to 341 residues: Protein-glutamate methylesterase/protein-glutamine glutaminase 2 (341 aa).

The region spanning 7 to 120 (KTLIVDDSLL…NRDLDSFFSE (114 aa)) is the Response regulatory domain. Residue Asp58 is modified to 4-aspartylphosphate. Residues 155–341 (VIAIGASTGG…QALYKLINQL (187 aa)) form the CheB-type methylesterase domain. Active-site residues include Ser161, His187, and Asp283.

It belongs to the CheB family. In terms of processing, phosphorylated by CheA. Phosphorylation of the N-terminal regulatory domain activates the methylesterase activity.

It is found in the cytoplasm. The catalysed reaction is [protein]-L-glutamate 5-O-methyl ester + H2O = L-glutamyl-[protein] + methanol + H(+). It catalyses the reaction L-glutaminyl-[protein] + H2O = L-glutamyl-[protein] + NH4(+). Involved in chemotaxis. Part of a chemotaxis signal transduction system that modulates chemotaxis in response to various stimuli. Catalyzes the demethylation of specific methylglutamate residues introduced into the chemoreceptors (methyl-accepting chemotaxis proteins or MCP) by CheR. Also mediates the irreversible deamidation of specific glutamine residues to glutamic acid. This Syntrophomonas wolfei subsp. wolfei (strain DSM 2245B / Goettingen) protein is Protein-glutamate methylesterase/protein-glutamine glutaminase 2.